Consider the following 156-residue polypeptide: Small ribosomal subunit protein uS7 (156 aa).

It belongs to the universal ribosomal protein uS7 family. Part of the 30S ribosomal subunit. Contacts proteins S9 and S11.

In terms of biological role, one of the primary rRNA binding proteins, it binds directly to 16S rRNA where it nucleates assembly of the head domain of the 30S subunit. Is located at the subunit interface close to the decoding center, probably blocks exit of the E-site tRNA. This is Small ribosomal subunit protein uS7 from Chromobacterium violaceum (strain ATCC 12472 / DSM 30191 / JCM 1249 / CCUG 213 / NBRC 12614 / NCIMB 9131 / NCTC 9757 / MK).